The sequence spans 380 residues: Cytochrome b (380 aa).

Transmembrane regions (helical) follow at residues Phe-34–Met-54, Trp-78–Ile-99, Trp-114–Leu-134, and Phe-179–Leu-199. Residues His-84 and His-98 each contribute to the heme b site. His-183 and His-197 together coordinate heme b. His-202 contributes to the a ubiquinone binding site. Transmembrane regions (helical) follow at residues Phe-227 to Ala-247, Leu-289 to His-309, Ala-321 to Gly-341, and Phe-348 to Pro-368.

The protein belongs to the cytochrome b family. The cytochrome bc1 complex contains 3 respiratory subunits (MT-CYB, CYC1 and UQCRFS1), 2 core proteins (UQCRC1 and UQCRC2) and probably 6 low-molecular weight proteins. Requires heme b as cofactor.

The protein resides in the mitochondrion inner membrane. Its function is as follows. Component of the ubiquinol-cytochrome c reductase complex (complex III or cytochrome b-c1 complex) that is part of the mitochondrial respiratory chain. The b-c1 complex mediates electron transfer from ubiquinol to cytochrome c. Contributes to the generation of a proton gradient across the mitochondrial membrane that is then used for ATP synthesis. In Rana dybowskii (Dybovsky's frog), this protein is Cytochrome b (mt-cyb).